A 211-amino-acid polypeptide reads, in one-letter code: Protein-L-isoaspartate O-methyltransferase (211 aa).

Ser62 is an active-site residue.

This sequence belongs to the methyltransferase superfamily. L-isoaspartyl/D-aspartyl protein methyltransferase family.

The protein localises to the cytoplasm. It carries out the reaction [protein]-L-isoaspartate + S-adenosyl-L-methionine = [protein]-L-isoaspartate alpha-methyl ester + S-adenosyl-L-homocysteine. In terms of biological role, catalyzes the methyl esterification of L-isoaspartyl residues in peptides and proteins that result from spontaneous decomposition of normal L-aspartyl and L-asparaginyl residues. It plays a role in the repair and/or degradation of damaged proteins. This is Protein-L-isoaspartate O-methyltransferase from Shewanella halifaxensis (strain HAW-EB4).